We begin with the raw amino-acid sequence, 146 residues long: Transcriptional regulator MraZ (146 aa).

SpoVT-AbrB domains are found at residues 7 to 54 and 83 to 126; these read HVTN…GPEL and GVYV…DPQA.

Belongs to the MraZ family. In terms of assembly, forms oligomers.

Its subcellular location is the cytoplasm. It localises to the nucleoid. In Rhizobium meliloti (strain 1021) (Ensifer meliloti), this protein is Transcriptional regulator MraZ.